Consider the following 500-residue polypeptide: FAD-linked oxidoreductase chyH (500 aa).

Residues 1 to 20 (MRLQAVTAVAAWAVASACQS) form the signal peptide. The region spanning 65 to 235 (LEVPTVNIVI…TSVTSKTYDI (171 aa)) is the FAD-binding PCMH-type domain. N-linked (GlcNAc...) asparagine glycosylation is found at Asn-199, Asn-266, Asn-275, and Asn-383.

It belongs to the oxygen-dependent FAD-linked oxidoreductase family. Requires FAD as cofactor.

The protein operates within pigment biosynthesis. In terms of biological role, FAD-linked oxidoreductase; part of the gene cluster that mediates the biosynthesis of the yellow pigment chrysogine. the NRPS chyA mediates the condensation of anthranilic acid and alanine into the intermediate 2-(2-aminopropanamido)benzoic acid. The remainder of the pathway is highly branched yielding at least 13 chrysogine-related compounds. The malonyl transferase chyE converts 2-(2-aminopropanamido)benzoic acid and 2-(2-aminopropanamido)benzamidine into 2-(2-(2-carboxyacetamido)propanamido)benzoic acid and 3-((1-((2-carbamoylphenyl)amino)-1-oxopropan-2-yl)amino)-3-oxopropanoic acid, respectively. ChyD is an amidase, being responsible for the amidation of the carboxylic acid moiety of 2-(2-aminopropanamido)benzoic acid, 2-(2-(2-carboxyacetamido)propanamido)benzoic acid and 2-(2-((4-amino-1-carboxy-4-oxobutyl)amino)propanamido)benzoic acid. ChyC is involved in the same reactions as ChyD, but plays a more minor role in the amidation reactions compared to chyD. The oxidoreductases chyH and chyM are involved in oxidation reactions that form N-pyruvoylanthranilamide from 2-(2-aminopropanamido)benzamidine and (1-((2-carbamoylphenyl)amino)-1-oxopropan-2-yl)glutamine, respectively. N-pyruvoylanthranilamide is further converted via two further branches in the pathway, yielding chrysogine and additional chrysogine-related coumpounds. Chrysogine is likely formed by a spontaneous ring closure from N-pyruvoylanthranilamide. The sequence is that of FAD-linked oxidoreductase chyH from Penicillium rubens (strain ATCC 28089 / DSM 1075 / NRRL 1951 / Wisconsin 54-1255) (Penicillium chrysogenum).